We begin with the raw amino-acid sequence, 347 residues long: Protein pelota homolog (347 aa).

The protein belongs to the eukaryotic release factor 1 family. Pelota subfamily. As to quaternary structure, monomer. A divalent metal cation serves as cofactor.

The protein resides in the cytoplasm. May function in recognizing stalled ribosomes, interact with stem-loop structures in stalled mRNA molecules, and effect endonucleolytic cleavage of the mRNA. May play a role in the release non-functional ribosomes and degradation of damaged mRNAs. Has endoribonuclease activity. This Methanothrix thermoacetophila (strain DSM 6194 / JCM 14653 / NBRC 101360 / PT) (Methanosaeta thermophila) protein is Protein pelota homolog.